Here is a 1085-residue protein sequence, read N- to C-terminus: Solute carrier family 12 member 4 (1085 aa).

The Cytoplasmic portion of the chain corresponds to 1–119; it reads MPHFTVVPVD…RRAAEAPSMG (119 aa). A phosphoserine mark is found at S24, S47, S51, S81, and S88. Residues 120–141 traverse the membrane as a discontinuously helical segment; sequence TLMGVYLPCLQNIFGVILFLRL. Positions 131 and 132 each coordinate K(+). At 142-149 the chain is on the extracellular side; that stretch reads TWMVGTAG. The helical transmembrane segment at 150–172 threads the bilayer; it reads VLQALLIVLICCCCTLLTAISMS. Residues 173–196 are Cytoplasmic-facing; sequence AIATNGVVPAGGSYFMISRSLGPE. Residues 197–225 traverse the membrane as a helical segment; sequence FGGAVGLCFYLGTTFAAAMYILGAIEILL. Y216 contributes to the K(+) binding site. Residues 226–248 lie on the Extracellular side of the membrane; that stretch reads TYIAPPAAIFYPSGAHDTSNATL. N245 carries an N-linked (GlcNAc...) asparagine glycan. 2 helical membrane passes run 249–271 and 272–297; these read NNMR…VGVK and YVNK…GGIK. Residues 298 to 419 lie on the Extracellular side of the membrane; sequence SIFDPPVFPV…LYVVADIATS (122 aa). A disulfide bridge links C308 with C323. Residues N312, N331, N347, and N361 are each glycosylated (N-linked (GlcNAc...) asparagine). A disulfide bridge connects residues C343 and C353. Residues 420–440 traverse the membrane as a helical segment; that stretch reads FTVLVGIFFPSVTGIMAGSNR. K(+) contacts are provided by P429 and T432. Positions 433, 434, and 435 each coordinate chloride. Over 441 to 450 the chain is Cytoplasmic; sequence SGDLRDAQKS. A helical transmembrane segment spans residues 451–473; it reads IPVGTILAIITTSLVYFSSVVLF. The Extracellular portion of the chain corresponds to 474–504; the sequence is GACIEGVVLRDKYGDGVSRNLVVGTLAWPSP. Residues 505 to 531 form a helical membrane-spanning segment; the sequence is WVIVIGSFFSTCGAGLQSLTGAPRLLQ. Over 532 to 554 the chain is Cytoplasmic; the sequence is AIAKDNIIPFLRVFGHGKVNGEP. Transmembrane regions (helical) follow at residues 555 to 575 and 576 to 598; these read TWAL…ASLD and MVAP…ACAV. Y589 lines the chloride pocket. Residues 599-612 lie on the Cytoplasmic side of the membrane; the sequence is QTLLRTPNWRPRFK. 2 consecutive transmembrane segments (helical) span residues 613 to 635 and 636 to 651; these read YYHW…VSSW and YYAL…IYKY. The Cytoplasmic portion of the chain corresponds to 652 to 1085; that stretch reads IEYQGAEKEW…GGREVITIYS (434 aa). Positions 665–681 are scissor helix; sequence IRGLSLSAARYALLRLE. Positions 697, 699, 707, 708, and 730 each coordinate ATP. S734 is modified (phosphoserine). G794, W795, and Y797 together coordinate ATP. S916 and S967 each carry phosphoserine. T983 carries the phosphothreonine modification. A Phosphoserine modification is found at S1050.

This sequence belongs to the SLC12A transporter family. K/Cl co-transporter subfamily. In terms of assembly, homodimer; adopts a domain-swap conformation at the scissor helices connecting the transmembrane domain and C-terminal domain. Heterodimer with other K-Cl cotransporters. Post-translationally, phosphorylated, phosphorylation may regulate transporter activity. Ubiquitous. Levels are much higher in erythrocytes from patients with Hb SC and Hb SS compared to normal AA erythrocytes. This may contribute to red blood cell dehydration and to the manifestation of sickle cell disease by increasing the intracellular concentration of HbS. In terms of tissue distribution, not detected in circulating reticulocytes.

It localises to the cell membrane. The catalysed reaction is K(+)(in) + chloride(in) = K(+)(out) + chloride(out). With respect to regulation, inhibited by WNK3. Its function is as follows. Mediates electroneutral potassium-chloride cotransport when activated by cell swelling. May contribute to cell volume homeostasis in single cells. May be involved in the regulation of basolateral Cl(-) exit in NaCl absorbing epithelia. No transporter activity. The protein is Solute carrier family 12 member 4 of Homo sapiens (Human).